A 249-amino-acid polypeptide reads, in one-letter code: Precorrin-4 C(11)-methyltransferase (249 aa).

Belongs to the precorrin methyltransferase family.

The catalysed reaction is precorrin-4 + S-adenosyl-L-methionine = precorrin-5 + S-adenosyl-L-homocysteine. It functions in the pathway cofactor biosynthesis; adenosylcobalamin biosynthesis; cob(II)yrinate a,c-diamide from precorrin-2 (aerobic route): step 4/10. Its function is as follows. Catalyzes the methylation of C-11 in precorrin-4 to form precorrin-5. The polypeptide is Precorrin-4 C(11)-methyltransferase (cobM) (Rhodococcus erythropolis (Arthrobacter picolinophilus)).